The following is a 528-amino-acid chain: Keratin, type II cytoskeletal 78 (528 aa).

A head region spans residues 1-104 (MSLSPCRARR…DPQFQVVRTQ (104 aa)). Residues 23 to 45 (VGRGRTGFSSRSLSSFGGCRGGS) form a disordered region. Over residues 24–39 (GRGRTGFSSRSLSSFG) the composition is skewed to low complexity. Positions 105 to 140 (ETQQIRVLNNQFASFIDKVRFLEQQNKVLETKWHLL) are coil 1A. The IF rod domain maps to 105–418 (ETQQIRVLNN…RLLEGEECRM (314 aa)). A linker 1 region spans residues 141-159 (QQQGLSDRPQGLESFFEAY). Residues 160–252 (LVRLRTQLEE…LYEEELGQLQ (93 aa)) are coil 1B. The interval 253–275 (TQASDMSVVLSMDNNRCLDFRDL) is linker 12. A coil 2 region spans residues 276–415 (IAEVRARYEE…TYRRLLEGEE (140 aa)). The segment at 416-528 (CRMSGECASQ…ESSLKTSVTY (113 aa)) is tail.

Belongs to the intermediate filament family. Heterotetramer of two type I and two type II keratins.

This Bos taurus (Bovine) protein is Keratin, type II cytoskeletal 78 (KRT78).